The sequence spans 722 residues: Pentatricopeptide repeat-containing protein At4g14820 (722 aa).

PPR repeat units lie at residues 75 to 109 (ESIV…GGRL), 110 to 140 (DQFS…AFKI), 145 to 175 (DPFV…MSHR), 176 to 210 (DVVT…NVMP), 211 to 245 (DEMI…DVRM), 246 to 276 (DTHL…MSVR), 277 to 307 (NLFV…TEKK), 308 to 342 (DLVC…GIKP), 343 to 377 (DVVS…GLES), 378 to 408 (ELSI…MPRR), 409 to 443 (NVVS…NVEP), 444 to 479 (NEVT…NITP), and 480 to 514 (KLEH…SNVV). Positions 515 to 590 (IWGSLMSACR…EKGLSRIDQN (76 aa)) are type E motif. Positions 591 to 621 (GKSHEFLIGDKRHKQSNEIYAKLDEVVSKLK) are type E(+) motif. A type DYW motif region spans residues 622–722 (LAGYVPDCGS…NGLCSCRDYW (101 aa)).

This sequence belongs to the PPR family. PCMP-H subfamily.

In Arabidopsis thaliana (Mouse-ear cress), this protein is Pentatricopeptide repeat-containing protein At4g14820 (PCMP-H3).